The chain runs to 343 residues: Putative trace amine-associated receptor 3 (343 aa).

The Extracellular portion of the chain corresponds to 1–35 (MDLTYIPEDLSSCPKFVNKILSSHQPLFSCPGDNV). A helical transmembrane segment spans residues 36–56 (FGYDWSHDYPLFGNLVIMVSI). The Cytoplasmic portion of the chain corresponds to 57-68 (SHFKQLHSPTNF). The chain crosses the membrane as a helical span at residues 69 to 89 (LILSMATTDFLLGFVIMPYSI). Topologically, residues 90 to 150 (MRSVESCWYF…TKMTNSTIKQ (61 aa)) are extracellular. An intrachain disulfide couples Cys104 to Cys189. Asn145 carries an N-linked (GlcNAc...) asparagine glycan. A helical transmembrane segment spans residues 151-168 (LLAFCWSVPALFSFGLVL). Residues 169 to 172 (SEAD) are Cytoplasmic-facing. The tract at residues 173-186 (VSGMQSYKILVACF) is extracellular Loop 2 (ECL2). A helical membrane pass occupies residues 173–193 (VSGMQSYKILVACFNFCALTF). Residues 194-198 (NKFWG) are Extracellular-facing. A helical membrane pass occupies residues 199 to 223 (TILFTTCFFTPGSIMVGIYGKIFIV). The Cytoplasmic segment spans residues 224–257 (SKQHARVISHVPENTKGAVKKHLSKKKDRKAAKT). A helical membrane pass occupies residues 258–278 (LGIVMGVFLACWLPCFLAVLI). Residues 279 to 287 (DPYLDYSTP) lie on the Extracellular side of the membrane. A helical membrane pass occupies residues 288–308 (ILILDLLVWLRYFNSTCNPLI). The Cytoplasmic segment spans residues 309 to 343 (HGFFNPWFQKAFKYIVSGKIFSSHSETANLFPEAH).

The protein belongs to the G-protein coupled receptor 1 family. As to expression, not expressed in the pons, thalamus, globus pallidus, caudate, putamen or cerebellum.

Its subcellular location is the cell membrane. Putative olfactory receptor activated by several primary trace amines. The polypeptide is Putative trace amine-associated receptor 3 (Homo sapiens (Human)).